A 737-amino-acid chain; its full sequence is SANT and BTB domain regulator of class switch recombination (737 aa).

The SANT domain maps to 21–59 (DMILYPLIGIPQTINWETVARLVPGLTPKECVKRFDELK). Residues 147–255 (MVIHVCDEAK…QCIQYCHKNM (109 aa)) enclose the BTB domain. Over residues 555–576 (SEEEEYTTGSEVTEDEVGDEEE) the composition is skewed to acidic residues. The disordered stretch occupies residues 555 to 618 (SEEEEYTTGS…TLEKSTSRDV (64 aa)). The segment covering 580-595 (KQRKKEKPKKFTKPPK) has biased composition (basic residues). Positions 604-615 (QKKEKTLEKSTS) are enriched in basic and acidic residues.

This sequence belongs to the KIAA1841 family. In terms of assembly, homodimer. Interacts (via the BTB domain) with HDAC1 and NCOR2.

Functionally, negatively regulates class switch recombination or isotype switching in splenic B-cells. The polypeptide is SANT and BTB domain regulator of class switch recombination (Rattus norvegicus (Rat)).